The sequence spans 481 residues: Tryptophan--tRNA ligase, cytoplasmic (481 aa).

The 57-residue stretch at Ser-12–Pro-68 folds into the WHEP-TRS domain. Lys-158 is modified (N6-succinyllysine). Positions Pro-168–His-177 match the 'HIGH' region motif. A 'KMSKS' region motif is present at residues Lys-353–Ser-357. Residue Ser-355 is modified to Phosphoserine.

The protein belongs to the class-I aminoacyl-tRNA synthetase family. In terms of assembly, homodimer. Interacts with oxidized form of GAPDH. In terms of processing, proteolytic cleavage generates 2 forms; T1-TrpRS and T2-TrpRS. Isoform 2 is widely expressed, isoform 1 is found only in embryonic stem cells.

The protein resides in the cytoplasm. It carries out the reaction tRNA(Trp) + L-tryptophan + ATP = L-tryptophyl-tRNA(Trp) + AMP + diphosphate + H(+). In terms of biological role, catalyzes the attachment of tryptophan to tRNA(Trp) in a two-step reaction: tryptophan is first activated by ATP to form Trp-AMP and then transferred to the acceptor end of the tRNA(Trp). Could also possess an angiostatic activity. This Mus musculus (Mouse) protein is Tryptophan--tRNA ligase, cytoplasmic.